The following is a 391-amino-acid chain: Probable acridone synthase 3 (391 aa).

The active site involves C164.

Belongs to the thiolase-like superfamily. Chalcone/stilbene synthases family.

The catalysed reaction is N-methylanthraniloyl-CoA + 3 malonyl-CoA + 3 H(+) = 1,3-dihydroxy-N-methylacridone + 3 CO2 + 4 CoA + H2O. The sequence is that of Probable acridone synthase 3 (ACS3) from Ruta graveolens (Common rue).